The following is a 1505-amino-acid chain: Synaptonemal complex protein 2 (1505 aa).

The segment at 439–483 (EKSNLQKKLTNPLEPDNSSSQRDRKNSQDEITTPSRKKMSEASMI) is disordered. Phosphoserine is present on residues Ser457 and Ser465. Thr471 is subject to Phosphothreonine. Ser494 is subject to Phosphoserine. The residue at position 503 (Thr503) is a Phosphothreonine. Phosphoserine occurs at positions 507, 516, 525, and 534. The tract at residues 536–571 (KSRQSDGRNRGNNRANHNKTATVQNKGHEHHESPDQ) is disordered. Phosphothreonine occurs at positions 613 and 638. Phosphoserine is present on residues Ser651, Ser655, and Ser746. The tract at residues 745 to 764 (KSPSRKSMRSHTKSRKELMS) is disordered. The segment covering 748–758 (SRKSMRSHTKS) has biased composition (basic residues). Phosphoserine is present on Ser920. Thr922 bears the Phosphothreonine mark. Disordered stretches follow at residues 949–974 (YSRN…QPRS) and 1035–1080 (KEET…NGRE). A compositionally biased stretch (basic residues) spans 953–962 (KNTKKCKSIK). Phosphoserine is present on residues Ser1121, Ser1123, Ser1130, Ser1146, Ser1150, Ser1162, Ser1165, and Ser1170. Thr1174 carries the phosphothreonine modification. Ser1188 bears the Phosphoserine mark. Residues 1199–1239 (NSYSDVSSNSSEKLYMEPESPDSCENHVQSKREENHAASPF) form a disordered region. Positions 1200-1209 (SYSDVSSNSS) are enriched in low complexity. 2 positions are modified to phosphoserine: Ser1218 and Ser1221. The segment covering 1222–1234 (CENHVQSKREENH) has biased composition (basic and acidic residues). A phosphoserine mark is found at Ser1237, Ser1280, and Ser1283. Thr1318 is subject to Phosphothreonine. A coiled-coil region spans residues 1384 to 1435 (ENIDKFQVTLLDELEKVEKDSQTLRDLEKEFVDIEEKIVHKMRAFHQSERER).

Belongs to the SYCP2 family. As to quaternary structure, component of the lateral elements of synaptonemal complexes. Interacts with TEX11. Heterodimer with SYCP3. Interacts with SYCP3, SMC1A and SMC3. In terms of processing, phosphorylated. As to expression, detected in spermatocytes and testis (at protein level). Spermatocytes and oocytes. Meiotic prophase cells.

It is found in the nucleus. It localises to the chromosome. In terms of biological role, major component of the axial/lateral elements of synaptonemal complexes (SCS) during meiotic prophase. Plays a role in the assembly of synaptonemal complexes. Required for normal meiotic chromosome synapsis during oocyte and spermatocyte development and for normal male and female fertility. Required for insertion of SYCP3 into synaptonemal complexes. May be involved in the organization of chromatin by temporarily binding to DNA scaffold attachment regions. Requires SYCP3, but not SYCP1, in order to be incorporated into the axial/lateral elements. This Rattus norvegicus (Rat) protein is Synaptonemal complex protein 2 (Sycp2).